A 216-amino-acid polypeptide reads, in one-letter code: Probable GTP-binding protein EngB (216 aa).

The EngB-type G domain occupies 24–205; that stretch reads ATPEIAFVGR…WARLAALAAE (182 aa). GTP-binding positions include 32-39, 59-63, 86-89, 153-156, and 184-186; these read GRSNVGKS, GRTRA, DLPG, TKTD, and FSA. Mg(2+) contacts are provided by Ser39 and Thr61.

This sequence belongs to the TRAFAC class TrmE-Era-EngA-EngB-Septin-like GTPase superfamily. EngB GTPase family. Requires Mg(2+) as cofactor.

Its function is as follows. Necessary for normal cell division and for the maintenance of normal septation. In Anaeromyxobacter dehalogenans (strain 2CP-1 / ATCC BAA-258), this protein is Probable GTP-binding protein EngB.